Reading from the N-terminus, the 106-residue chain is UPF0145 protein Nmul_A0734 (106 aa).

The protein belongs to the UPF0145 family.

The sequence is that of UPF0145 protein Nmul_A0734 from Nitrosospira multiformis (strain ATCC 25196 / NCIMB 11849 / C 71).